The sequence spans 270 residues: Phosphonates import ATP-binding protein PhnC 2 (270 aa).

In terms of domain architecture, ABC transporter spans 2-245; it reads LVVEGLTCRF…IARELYDLEA (244 aa). 34 to 41 contributes to the ATP binding site; the sequence is GRSGAGKS.

Belongs to the ABC transporter superfamily. Phosphonates importer (TC 3.A.1.9.1) family. The complex is composed of two ATP-binding proteins (PhnC), two transmembrane proteins (PhnE) and a solute-binding protein (PhnD).

The protein resides in the cell inner membrane. The catalysed reaction is phosphonate(out) + ATP + H2O = phosphonate(in) + ADP + phosphate + H(+). Part of the ABC transporter complex PhnCDE involved in phosphonates import. Responsible for energy coupling to the transport system. The polypeptide is Phosphonates import ATP-binding protein PhnC 2 (Rhodopseudomonas palustris (strain BisA53)).